Here is a 515-residue protein sequence, read N- to C-terminus: SWI/SNF-related matrix-associated actin-dependent regulator of chromatin subfamily D member 1 (515 aa).

A disordered region spans residues 1 to 103 (MAARAGFQSV…SGMDQSRKRP (103 aa)). A compositionally biased stretch (gly residues) spans 14–23 (GGAGASGGAG). The tract at residues 43–167 (APGQGLYRSP…DQTIMRKRLD (125 aa)) is interaction with ESR1, NR1H4, NR3C1, PGR and SMARCA4. Arginine 68 and arginine 88 each carry asymmetric dimethylarginine. A Glycyl lysine isopeptide (Lys-Gly) (interchain with G-Cter in SUMO2) cross-link involves residue lysine 101. An interaction with SMARCC1 and SMARCC2 region spans residues 168–474 (IQEALKRPIK…TMTDVVGNPE (307 aa)). Positions 180–515 (RKLRIFISNT…LEQALGIRNT (336 aa)) are necessary for GR/NR3C1-mediated remodeling and transcription from chromatin; required for GR/NR3C1 interaction with the BRG1/SMARCA4 complex in vivo. Residue threonine 203 is modified to Phosphothreonine. Lysine 223 carries the N6-acetyllysine modification. One can recognise an SWIB/MDM2 domain in the interval 290–367 (YQPPQFKLDP…PQRLHALLMP (78 aa)). Residues 412–440 (ASQQEIATLDNKIHETIETINQLKTQREF) adopt a coiled-coil conformation.

The protein belongs to the SMARCD family. In terms of assembly, component of the multiprotein chromatin-remodeling complexes SWI/SNF: SWI/SNF-A (BAF), SWI/SNF-B (PBAF) and related complexes. The canonical complex contains a catalytic subunit (either SMARCA4/BRG1/BAF190A or SMARCA2/BRM/BAF190B), and at least SMARCE1, ACTL6A/BAF53, SMARCC1/BAF155, SMARCC2/BAF170, and SMARCB1/SNF5/BAF47. Other subunits specific to each of the complexes may also be present permitting several possible combinations developmentally and tissue specific. Component of the BAF complex, which includes at least actin (ACTB), ARID1A/BAF250A, ARID1B/BAF250B, SMARCA2/BRM, SMARCA4/BRG1/BAF190A, ACTL6A/BAF53, ACTL6B/BAF53B, SMARCE1/BAF57, SMARCC1/BAF155, SMARCC2/BAF170, SMARCB1/SNF5/INI1, and one or more SMARCD1/BAF60A, SMARCD2/BAF60B, or SMARCD3/BAF60C. In muscle cells, the BAF complex also contains DPF3. Component of neural progenitors-specific chromatin remodeling complex (npBAF complex) composed of at least, ARID1A/BAF250A or ARID1B/BAF250B, SMARCD1/BAF60A, SMARCD3/BAF60C, SMARCA2/BRM/BAF190B, SMARCA4/BRG1/BAF190A, SMARCB1/BAF47, SMARCC1/BAF155, SMARCE1/BAF57, SMARCC2/BAF170, PHF10/BAF45A, ACTL6A/BAF53A and actin. Component of neuron-specific chromatin remodeling complex (nBAF complex) composed of at least, ARID1A/BAF250A or ARID1B/BAF250B, SMARCD1/BAF60A, SMARCD3/BAF60C, SMARCA2/BRM/BAF190B, SMARCA4/BRG1/BAF190A, SMARCB1/BAF47, SMARCC1/BAF155, SMARCE1/BAF57, SMARCC2/BAF170, DPF1/BAF45B, DPF3/BAF45C, ACTL6B/BAF53B and actin. Component of the SWI/SNF-B (PBAF) chromatin remodeling complex, at least composed of SMARCA4/BRG1, SMARCB1/BAF47/SNF5, ACTL6A/BAF53A or ACTL6B/BAF53B, SMARCE1/BAF57, SMARCD1/BAF60A, SMARCD2/BAF60B, perhaps SMARCD3/BAF60C, SMARCC1/BAF155, SMARCC2/BAF170, PBRM1/BAF180, ARID2/BAF200 and actin (ACTB). Component of SWI/SNF (GBAF) subcomplex, which includes at least BICRA or BICRAL (mutually exclusive), BRD9, SS18, SMARCA2/BRM, SMARCA4/BRG1/BAF190A, ACTL6A/BAF53, SMARCC1/BAF155, and SMARCD1/BAF60A. Specifically interacts with the VDR heterodimer complex. Interacts with ESR1, NR3C1, NR1H4, PGR, SMARCA4, SMARCC1 and SMARCC2. Interacts with DPF2. Interacts with DPF3a (isoform 2 of DPF3/BAF45C) and with HDGFL2 in a DPF3a-dependent manner. Interacts with FOS, FOSB isoform 1 and 2, FOSL1 and FOSL2. In terms of tissue distribution, expressed in all tissues tested, including brain, heart, kidney, liver, lung, muscle, pancreas and placenta.

It localises to the nucleus. In terms of biological role, involved in transcriptional activation and repression of select genes by chromatin remodeling (alteration of DNA-nucleosome topology). Component of SWI/SNF chromatin remodeling complexes that carry out key enzymatic activities, changing chromatin structure by altering DNA-histone contacts within a nucleosome in an ATP-dependent manner. Belongs to the neural progenitors-specific chromatin remodeling complex (npBAF complex) and the neuron-specific chromatin remodeling complex (nBAF complex). During neural development a switch from a stem/progenitor to a postmitotic chromatin remodeling mechanism occurs as neurons exit the cell cycle and become committed to their adult state. The transition from proliferating neural stem/progenitor cells to postmitotic neurons requires a switch in subunit composition of the npBAF and nBAF complexes. As neural progenitors exit mitosis and differentiate into neurons, npBAF complexes which contain ACTL6A/BAF53A and PHF10/BAF45A, are exchanged for homologous alternative ACTL6B/BAF53B and DPF1/BAF45B or DPF3/BAF45C subunits in neuron-specific complexes (nBAF). The npBAF complex is essential for the self-renewal/proliferative capacity of the multipotent neural stem cells. The nBAF complex along with CREST plays a role regulating the activity of genes essential for dendrite growth. Has a strong influence on vitamin D-mediated transcriptional activity from an enhancer vitamin D receptor element (VDRE). May be a link between mammalian SWI-SNF-like chromatin remodeling complexes and the vitamin D receptor (VDR) heterodimer. Mediates critical interactions between nuclear receptors and the BRG1/SMARCA4 chromatin-remodeling complex for transactivation. Interacts with AKIRIN2. This is SWI/SNF-related matrix-associated actin-dependent regulator of chromatin subfamily D member 1 from Homo sapiens (Human).